Here is a 142-residue protein sequence, read N- to C-terminus: Large ribosomal subunit protein uL13 (142 aa).

The protein belongs to the universal ribosomal protein uL13 family. As to quaternary structure, part of the 50S ribosomal subunit.

In terms of biological role, this protein is one of the early assembly proteins of the 50S ribosomal subunit, although it is not seen to bind rRNA by itself. It is important during the early stages of 50S assembly. The polypeptide is Large ribosomal subunit protein uL13 (Cupriavidus metallidurans (strain ATCC 43123 / DSM 2839 / NBRC 102507 / CH34) (Ralstonia metallidurans)).